We begin with the raw amino-acid sequence, 242 residues long: 1-(5-phosphoribosyl)-5-[(5-phosphoribosylamino)methylideneamino] imidazole-4-carboxamide isomerase (242 aa).

D8 acts as the Proton acceptor in catalysis. Residue D129 is the Proton donor of the active site.

It belongs to the HisA/HisF family.

Its subcellular location is the cytoplasm. The catalysed reaction is 1-(5-phospho-beta-D-ribosyl)-5-[(5-phospho-beta-D-ribosylamino)methylideneamino]imidazole-4-carboxamide = 5-[(5-phospho-1-deoxy-D-ribulos-1-ylimino)methylamino]-1-(5-phospho-beta-D-ribosyl)imidazole-4-carboxamide. Its pathway is amino-acid biosynthesis; L-histidine biosynthesis; L-histidine from 5-phospho-alpha-D-ribose 1-diphosphate: step 4/9. The sequence is that of 1-(5-phosphoribosyl)-5-[(5-phosphoribosylamino)methylideneamino] imidazole-4-carboxamide isomerase from Erythrobacter litoralis (strain HTCC2594).